Reading from the N-terminus, the 197-residue chain is Imidazoleglycerol-phosphate dehydratase (197 aa).

The protein belongs to the imidazoleglycerol-phosphate dehydratase family.

Its subcellular location is the cytoplasm. It carries out the reaction D-erythro-1-(imidazol-4-yl)glycerol 3-phosphate = 3-(imidazol-4-yl)-2-oxopropyl phosphate + H2O. The protein operates within amino-acid biosynthesis; L-histidine biosynthesis; L-histidine from 5-phospho-alpha-D-ribose 1-diphosphate: step 6/9. The chain is Imidazoleglycerol-phosphate dehydratase from Pseudomonas fluorescens (strain Pf0-1).